Reading from the N-terminus, the 519-residue chain is MALQNAWQNTKERARETWAQLTWSEVSGSLGDLGTFLPLLIGLVQKVHLDLGTTLTITGLYNIISGWQFRIPMCVQPMKTIAAVALAGGAAGLDLPQLLHAGLFVAGCVGLLGASQAIDLFNWLVPPPVIRGVQLAVGVKLAMKGVDMALRLHGGPSSGWRPWLGTEGLVVGAVALAAMIATTLPPRAARRGTLEAADEGGLGPRPTDTAFEPLLRRLPACCGGGDRAPQVEGAAVSAERAGLLAHAEGGERSGNLDDGTEAGVGAAAGGGGCGGGGGGGRIPSALIAVVVGLAMAVLHRPGLVWELRLGPTLPRLLRPSWPDFKTGALRGGLPQLPLTTLNSVIAVTQLANALFGDKPEAERRRWRPSAVALSVALLNGAGVWLGAMPCCHGAGGLAAQYKFGARTGHAPILLGCIKAALGLLFGGSLVVLLEAFPQPLLGALLTVSGIELASVVRHTRSPRGYTFALLTAVAILALDNTGTGFLVGLVGVAAVAAYEGAVAAAAARWPRVFARGGRA.

The next 7 membrane-spanning stretches (helical) occupy residues Leu98–Ile118, Leu164–Leu184, Ala370–Cys390, Ile412–Leu432, Phe436–Val456, Gly464–Gly484, and Phe485–Ala505.

The protein belongs to the SLC26A/SulP transporter (TC 2.A.53) family.

The protein localises to the membrane. With respect to regulation, 60% inhibition by 20 uM tungstate or by lack of glucose in the medium, but no inhibition by sulfate. High affinity molybdate transporter. Acts through an energy-dependent process. The chain is Molybdate transporter 1 (MOT1) from Chlamydomonas reinhardtii (Chlamydomonas smithii).